A 138-amino-acid polypeptide reads, in one-letter code: Small ribosomal subunit protein uS11c (138 aa).

The protein belongs to the universal ribosomal protein uS11 family. Part of the 30S ribosomal subunit.

It is found in the plastid. Its subcellular location is the chloroplast. This is Small ribosomal subunit protein uS11c from Morus indica (Mulberry).